Here is a 551-residue protein sequence, read N- to C-terminus: Crossover junction endonuclease EME1B (551 aa).

Disordered regions lie at residues 1–55 (MNDH…PIFV) and 187–239 (TTLP…RLEK). Residues 37–51 (SDPTPQKQPPESSFT) show a composition bias toward polar residues. Positions 202–239 (SKEDKTSAMEEKKLRKEQERLEKAASKAEEAERKRLEK) are enriched in basic and acidic residues. Residues 203–253 (KEDKTSAMEEKKLRKEQERLEKAASKAEEAERKRLEKEKKKWEKGKLALKS) adopt a coiled-coil conformation. The ERCC4 domain maps to 287–484 (NPIERSIVWT…PSMKSLLKVY (198 aa)).

Belongs to the EME1/MMS4 family. In terms of assembly, forms a heterodimer with MUS81. Requires Mg(2+) as cofactor. Ca(2+) is required as a cofactor.

It localises to the nucleus. Its function is as follows. Interacts with MUS81 to form a DNA structure-specific endonuclease with substrate preference for branched DNA structures with a 5'-end at the branch nick. Typical substrates include 3'-flap structures, D-loops, replication forks, nicked Holliday junctions and also intact Holliday junctions with a reduced efficiency. May be required in mitosis for the processing of stalled or collapsed replication fork intermediates. Plays a role in DNA repair and in genotoxic stress-induced homologous recombination (HR) in somatic cells. Mediates a subset of meiotic recombination events that are insensitive to crossover interference. This Arabidopsis thaliana (Mouse-ear cress) protein is Crossover junction endonuclease EME1B (EME1B).